Reading from the N-terminus, the 364-residue chain is Flagellar P-ring protein (364 aa).

Residues 1–29 form the signal peptide; that stretch reads MKTIGGKVFRHAAILAACVLPLWCQPALA.

It belongs to the FlgI family. In terms of assembly, the basal body constitutes a major portion of the flagellar organelle and consists of four rings (L,P,S, and M) mounted on a central rod.

It localises to the periplasm. The protein localises to the bacterial flagellum basal body. Functionally, assembles around the rod to form the L-ring and probably protects the motor/basal body from shearing forces during rotation. In Dechloromonas aromatica (strain RCB), this protein is Flagellar P-ring protein.